We begin with the raw amino-acid sequence, 418 residues long: Glutamyl-tRNA reductase (418 aa).

Substrate contacts are provided by residues 49 to 52, serine 108, 113 to 115, and glutamine 119; these read TCNR and EPQ. Cysteine 50 functions as the Nucleophile in the catalytic mechanism. An NADP(+)-binding site is contributed by 188 to 193; sequence GAGETI.

Belongs to the glutamyl-tRNA reductase family. In terms of assembly, homodimer.

The enzyme catalyses (S)-4-amino-5-oxopentanoate + tRNA(Glu) + NADP(+) = L-glutamyl-tRNA(Glu) + NADPH + H(+). It functions in the pathway porphyrin-containing compound metabolism; protoporphyrin-IX biosynthesis; 5-aminolevulinate from L-glutamyl-tRNA(Glu): step 1/2. In terms of biological role, catalyzes the NADPH-dependent reduction of glutamyl-tRNA(Glu) to glutamate 1-semialdehyde (GSA). This chain is Glutamyl-tRNA reductase, found in Aliivibrio fischeri (strain MJ11) (Vibrio fischeri).